We begin with the raw amino-acid sequence, 830 residues long: WD repeat-containing protein 75 (830 aa).

9 WD repeats span residues glutamate 4 to serine 43, glutamate 47 to aspartate 86, glycine 90 to serine 131, lysine 145 to lysine 184, leucine 193 to arginine 231, lysine 237 to arginine 276, threonine 279 to histidine 318, serine 324 to serine 362, and glutamine 376 to methionine 423. A Glycyl lysine isopeptide (Lys-Gly) (interchain with G-Cter in SUMO2) cross-link involves residue lysine 123. A Glycyl lysine isopeptide (Lys-Gly) (interchain with G-Cter in SUMO2) cross-link involves residue lysine 427. 4 WD repeats span residues glycine 430 to isoleucine 474, glycine 487 to aspartate 525, tryptophan 529 to asparagine 569, and alanine 574 to lysine 611. Lysine 466 is subject to N6-acetyllysine. Phosphoserine occurs at positions 664 and 672. Lysine 676 participates in a covalent cross-link: Glycyl lysine isopeptide (Lys-Gly) (interchain with G-Cter in SUMO2). The interval serine 763–histidine 806 is disordered. Acidic residues predominate over residues glutamate 769 to aspartate 787. Phosphoserine occurs at positions 779, 782, 796, and 811.

As to quaternary structure, component of the proposed t-UTP subcomplex of the ribosomal small subunit (SSU) processome. SSU processome is composed of more than 70 proteins and the RNA chaperone small nucleolar RNA (snoRNA) U3.

It is found in the nucleus. The protein localises to the nucleolus. Functionally, ribosome biogenesis factor. Part of the small subunit (SSU) processome, first precursor of the small eukaryotic ribosomal subunit. During the assembly of the SSU processome in the nucleolus, many ribosome biogenesis factors, an RNA chaperone and ribosomal proteins associate with the nascent pre-rRNA and work in concert to generate RNA folding, modifications, rearrangements and cleavage as well as targeted degradation of pre-ribosomal RNA by the RNA exosome. Involved in nucleolar processing of pre-18S ribosomal RNA. Required for optimal pre-ribosomal RNA transcription by RNA polymerase I. This Homo sapiens (Human) protein is WD repeat-containing protein 75.